A 156-amino-acid polypeptide reads, in one-letter code: Probable succinate transporter subunit YjjB (156 aa).

4 consecutive transmembrane segments (helical) span residues 7–27 (WALL…AMVF), 54–74 (FGMN…VIGI), 86–106 (VFTV…TAMI), and 128–148 (FLKA…PGLW).

The protein belongs to the ThrE exporter (TC 2.A.79) family. The transporter is composed of YjjB and YjjP.

Its subcellular location is the cell inner membrane. Functionally, involved in succinate export with YjjP. Both proteins are required for export. The sequence is that of Probable succinate transporter subunit YjjB from Yersinia pseudotuberculosis serotype I (strain IP32953).